Consider the following 146-residue polypeptide: Stress-responsive DNAJB4-interacting membrane protein 1 (146 aa).

An N-terminal signal peptide occupies residues 1 to 26 (MWPAPCSVGRLLIFFMCSSSGYVVQG). Residues 27 to 66 (CGPSPGARTTLGSPLSLWSIKTPSHIFCTRRAINLGFPSP) lie on the Extracellular side of the membrane. Residues 67–87 (PLVQLIFWSLNAGLDLYLCLI) form a helical membrane-spanning segment. Over 88-94 (SSCGFSQ) the chain is Cytoplasmic. The helical transmembrane segment at 95 to 115 (VFWPVEAFCSFSLSFFALALS) threads the bilayer. Topologically, residues 116 to 146 (HKFVICRLDQHIFSGFTKSLKNLPPCHRTDI) are extracellular.

As to quaternary structure, homodimer. Interacts with DNAJB4. Expressed in brain with higher detection in neurons than astrocytes. Decreased expression in Alzheimer brains. Detected at protein level in brain and cervix.

It localises to the membrane. Its function is as follows. Promotes neuronal cells survival to stress conditions. This is Stress-responsive DNAJB4-interacting membrane protein 1 (SDIM1) from Homo sapiens (Human).